A 128-amino-acid chain; its full sequence is Thor profilin (128 aa).

Belongs to the Asgard profilin family.

Its subcellular location is the cytoplasm. The protein resides in the cytoskeleton. Its function is as follows. Has no profilin activity against rabbit actin. The chain is Thor profilin from Thorarchaeota archaeon (strain AB_25).